Reading from the N-terminus, the 141-residue chain is Hemoglobin subunit alpha-1/2 (141 aa).

The region spanning 1–141 (VLSPADKTNV…VSTVLTSKYR (141 aa)) is the Globin domain. The residue at position 3 (Ser-3) is a Phosphoserine. Residue Lys-7 is modified to N6-succinyllysine. At Thr-8 the chain carries Phosphothreonine. Lys-11 bears the N6-succinyllysine mark. Lys-16 carries the N6-acetyllysine; alternate modification. Lys-16 is modified (N6-succinyllysine; alternate). A Phosphotyrosine modification is found at Tyr-24. A Phosphoserine modification is found at Ser-35. N6-succinyllysine is present on Lys-40. Position 49 is a phosphoserine (Ser-49). O2 is bound at residue His-58. His-87 is a binding site for heme b. Phosphoserine is present on Ser-102. Thr-108 carries the post-translational modification Phosphothreonine. Ser-124 is subject to Phosphoserine. 2 positions are modified to phosphothreonine: Thr-134 and Thr-137. Phosphoserine is present on Ser-138.

This sequence belongs to the globin family. As to quaternary structure, heterotetramer of two alpha chains and two beta chains. In terms of tissue distribution, red blood cells.

Involved in oxygen transport from the lung to the various peripheral tissues. The sequence is that of Hemoglobin subunit alpha-1/2 from Mustela lutreola (European mink).